A 311-amino-acid chain; its full sequence is tRNA dimethylallyltransferase (311 aa).

10–17 (GPTASGKT) contacts ATP. 12–17 (TASGKT) contributes to the substrate binding site. Interaction with substrate tRNA stretches follow at residues 35-38 (DSAL), 159-163 (QRINR), and 240-245 (RCVGYR).

It belongs to the IPP transferase family. Monomer. The cofactor is Mg(2+).

The enzyme catalyses adenosine(37) in tRNA + dimethylallyl diphosphate = N(6)-dimethylallyladenosine(37) in tRNA + diphosphate. Catalyzes the transfer of a dimethylallyl group onto the adenine at position 37 in tRNAs that read codons beginning with uridine, leading to the formation of N6-(dimethylallyl)adenosine (i(6)A). In Haemophilus influenzae (strain PittEE), this protein is tRNA dimethylallyltransferase.